Reading from the N-terminus, the 210-residue chain is Ribosomal RNA large subunit methyltransferase E (210 aa).

Positions 61, 63, 81, 97, and 122 each coordinate S-adenosyl-L-methionine. The active-site Proton acceptor is lysine 162.

It belongs to the class I-like SAM-binding methyltransferase superfamily. RNA methyltransferase RlmE family.

The protein resides in the cytoplasm. It carries out the reaction uridine(2552) in 23S rRNA + S-adenosyl-L-methionine = 2'-O-methyluridine(2552) in 23S rRNA + S-adenosyl-L-homocysteine + H(+). Specifically methylates the uridine in position 2552 of 23S rRNA at the 2'-O position of the ribose in the fully assembled 50S ribosomal subunit. In Xanthomonas campestris pv. campestris (strain 8004), this protein is Ribosomal RNA large subunit methyltransferase E.